We begin with the raw amino-acid sequence, 159 residues long: NADH-quinone oxidoreductase subunit I (159 aa).

2 4Fe-4S ferredoxin-type domains span residues 50–80 and 90–119; these read QRRY…IESE and KRYD…ETHI. 8 residues coordinate [4Fe-4S] cluster: Cys-60, Cys-63, Cys-66, Cys-70, Cys-99, Cys-102, Cys-105, and Cys-109.

Belongs to the complex I 23 kDa subunit family. In terms of assembly, NDH-1 is composed of 14 different subunits. Subunits NuoA, H, J, K, L, M, N constitute the membrane sector of the complex. [4Fe-4S] cluster is required as a cofactor.

Its subcellular location is the cell inner membrane. The enzyme catalyses a quinone + NADH + 5 H(+)(in) = a quinol + NAD(+) + 4 H(+)(out). Its function is as follows. NDH-1 shuttles electrons from NADH, via FMN and iron-sulfur (Fe-S) centers, to quinones in the respiratory chain. The immediate electron acceptor for the enzyme in this species is believed to be ubiquinone. Couples the redox reaction to proton translocation (for every two electrons transferred, four hydrogen ions are translocated across the cytoplasmic membrane), and thus conserves the redox energy in a proton gradient. The polypeptide is NADH-quinone oxidoreductase subunit I (Neisseria meningitidis serogroup A / serotype 4A (strain DSM 15465 / Z2491)).